We begin with the raw amino-acid sequence, 3726 residues long: Histone-lysine N-methyltransferase trithorax (3726 aa).

Disordered stretches follow at residues 1-247 (MGRS…ATTS), 321-352 (QLNS…GVGG), 371-429 (NEVA…TAKQ), and 509-624 (AGAS…RSTR). Low complexity-rich tracts occupy residues 31-53 (PAEP…GSSA) and 71-101 (GGAS…STGS). The span at 102–115 (GSSGSGSTNGGSVN) shows a compositional bias: gly residues. Residues 126–143 (LDKEAVTKDQNGDGDKTR) are compositionally biased toward basic and acidic residues. The segment covering 147 to 205 (SSAPSGKLSAAASGKALSKSSRTFSASTSVTSSGRSSGSSPDGNSGASSDGASSGISCG) has biased composition (low complexity). Polar residues predominate over residues 206-215 (KSTAKSTEAS). Residues 222-247 (TTGAGTCSSAKSSKASSGTTSEATTS) are compositionally biased toward low complexity. Low complexity-rich tracts occupy residues 384–402 (AAAN…GPPA) and 509–525 (AGAS…SSSN). Residues 553–586 (PEDQNNAEDDEMDDDDDDEEAEEDDENEDDNDEA) are compositionally biased toward acidic residues. The segment covering 587 to 610 (VSEKSAETEKSAGADERDPDEKQL) has biased composition (basic and acidic residues). The nuclear receptor DNA-binding region spans 759-884 (PSACSICSAV…PGMRGEAAAR (126 aa)). Disordered regions lie at residues 915–937 (TSVK…PNPL), 981–1049 (LTKK…SHGV), 1115–1184 (VPSA…SSAK), and 1208–1231 (DIAT…KEHR). The span at 918-937 (KWKSSGDSTSALTSIKPNPL) shows a compositional bias: polar residues. The span at 986 to 1000 (SKQEKEKVKESEQSE) shows a compositional bias: basic and acidic residues. The segment covering 1031–1041 (PQTSTTTQPSA) has biased composition (low complexity). Positions 1123–1132 (SPEKPTHIVT) are enriched in basic and acidic residues. 2 stretches are compositionally biased toward low complexity: residues 1173-1183 (GTASAAGGSSA) and 1211-1223 (TSSS…NQTQ). PHD-type zinc fingers lie at residues 1266–1347 (RALC…CTVC), 1348–1393 (YTCN…CLKC), and 1421–1482 (GNFC…CARR). One can recognise a Bromo domain in the interval 1496–1663 (AVMEEFKASL…SEQFPWFQNE (168 aa)). The interval 1573–1592 (FKDQQQQQQQRNANMNKPRV) is disordered. A C2HC pre-PHD-type zinc finger spans residues 1734–1774 (TRMCLFCRKSGEGLSGEEARLLYCGHDCWVHTNCAMWSAEV). The PHD-type 4 zinc-finger motif lies at 1795 to 1842 (IKCTVCGNRGATVGCNVRSCGEHYHYPCARSIDCAFLTDKSMYCPAHA). One can recognise an FYR N-terminal domain in the interval 1884–1941 (RVQFHIGSLEVRQLGAIVPRFSDSYEAVVPINFLCSRLYWSSKEPWKIVEYTVRTTIQ). Disordered stretches follow at residues 1991–2019 (GGTD…PQQQ), 2068–2110 (TQAM…WPAS), 2283–2302 (CSPT…QGMT), 2649–2669 (GGGA…LGGT), 2866–2894 (SNLK…IASK), 3029–3096 (QHFS…PTPP), and 3347–3381 (RKEE…IQEP). A compositionally biased stretch (low complexity) spans 2074-2087 (NQAQNQNQQAGGAN). Positions 3032-3043 (STSSSSSSSNCS) are enriched in low complexity. Positions 3044–3057 (LPTNVVNPMQQQAP) are enriched in polar residues. An FYR C-terminal domain is found at 3386–3470 (GPHLLYEIQS…EKCSKYTPKY (85 aa)). The SET domain maps to 3588 to 3704 (DYVGVFRSHI…QGEELTYDYK (117 aa)). Residues His-3598 and Arg-3600 each contribute to the S-adenosyl-L-methionine site. Cys-3641 is subject to S-methylcysteine; by autocatalysis. S-adenosyl-L-methionine-binding positions include Tyr-3642 and 3665 to 3666 (NH). Residues Cys-3668, Cys-3714, Cys-3716, and Cys-3721 each contribute to the Zn(2+) site. One can recognise a Post-SET domain in the interval 3710–3726 (EKIPCSCGSKRCRKYLN).

The protein belongs to the class V-like SAM-binding methyltransferase superfamily. Histone-lysine methyltransferase family. TRX/MLL subfamily. In terms of assembly, interacts (via SET domain) with ash1 (via SET domain). Interacts with Nup98. In terms of tissue distribution, maternal isoforms are expressed in syncytial blastoderm, confined to the ventral region fated to become mesoderm. An additional broad domain of expression arises during cellularization and is quickly resolved into four pair-rule-like stripes in the posterior half of the embryo.

The protein localises to the nucleus. Its subcellular location is the chromosome. The catalysed reaction is L-lysyl(9)-[histone H3] + 3 S-adenosyl-L-methionine = N(6),N(6),N(6)-trimethyl-L-lysyl(9)-[histone H3] + 3 S-adenosyl-L-homocysteine + 3 H(+). It carries out the reaction L-cysteinyl-[protein] + S-adenosyl-L-methionine = S-methyl-L-cysteinyl-[protein] + S-adenosyl-L-homocysteine + H(+). Functionally, histone methyltransferase that methylates 'Lys-4' of histone H3 (H3K4me). H3K4me represents a specific tag for epigenetic transcriptional activation. Functions in segment determination through interaction with genes of bithorax (BX-C) and antennapedia (ANT-C) complexes. Acts as an activator of BX-C. Involved in the very early regulation of homeotic genes expressed only in the posterior region of the embryo. Also has auto-methylation activity on Cys-3641. This Drosophila melanogaster (Fruit fly) protein is Histone-lysine N-methyltransferase trithorax.